The following is a 186-amino-acid chain: ATP synthase subunit delta (186 aa).

Belongs to the ATPase delta chain family. F-type ATPases have 2 components, F(1) - the catalytic core - and F(0) - the membrane proton channel. F(1) has five subunits: alpha(3), beta(3), gamma(1), delta(1), epsilon(1). CF(0) has four main subunits: a(1), b(1), b'(1) and c(10-14). The alpha and beta chains form an alternating ring which encloses part of the gamma chain. F(1) is attached to F(0) by a central stalk formed by the gamma and epsilon chains, while a peripheral stalk is formed by the delta, b and b' chains.

The protein localises to the cell inner membrane. Its function is as follows. F(1)F(0) ATP synthase produces ATP from ADP in the presence of a proton or sodium gradient. F-type ATPases consist of two structural domains, F(1) containing the extramembraneous catalytic core and F(0) containing the membrane proton channel, linked together by a central stalk and a peripheral stalk. During catalysis, ATP synthesis in the catalytic domain of F(1) is coupled via a rotary mechanism of the central stalk subunits to proton translocation. This protein is part of the stalk that links CF(0) to CF(1). It either transmits conformational changes from CF(0) to CF(1) or is implicated in proton conduction. This chain is ATP synthase subunit delta, found in Rhodopseudomonas palustris (strain BisA53).